A 453-amino-acid chain; its full sequence is MLQLGSQPHETFAKLSKKYGPLMSIHLGSLYTVIVSSPEMAKEIMHKYGQVFSGRTIAQAVHACDHDKISMGFLPVGAEWRDMRKICKEQMFSHQSMEDSQNLRKQKLQQLLDYTQKCSEEGRGIDIREAAFITTLNLMSATLFSMQATEFDSKVTMEFKEIIEGVASIVGVPNFADYFPILRPFDPQGVKRRADVYFGRLLGLIEGYLNERIEFRKANPNAPKKDDFLETLVDALDAKDYKLKTEHLTHLMLDLFVGGSETSTTEIEWIMWELVASPEKMAKVKAELKSVMGGEKVVDESMMPRLPYLQAVVKESMRLHPPGPLLLPRKAESDQVVNGYLIPKGTQVLINAWAMGRDSSLWKNPDSFEPERFLDQKIDFKGTDYELIPFGSGRRVCPGMPLANRILHTVTATLVHNFDWKLERPEANDAHKGVLFGFAVRRAVPLKIVPIKA.

The chain crosses the membrane as a helical span at residues 15-35; sequence LSKKYGPLMSIHLGSLYTVIV. Residue cysteine 397 participates in heme binding.

It belongs to the cytochrome P450 family. The cofactor is heme. Expressed in leaf glandular trichomes.

It localises to the membrane. It carries out the reaction abieta-8,11,13-triene + reduced [NADPH--hemoprotein reductase] + O2 = ferruginol + oxidized [NADPH--hemoprotein reductase] + H2O + H(+). It catalyses the reaction ferruginol + reduced [NADPH--hemoprotein reductase] + O2 = 11-hydroxyferruginol + oxidized [NADPH--hemoprotein reductase] + H2O + H(+). The enzyme catalyses miltiradiene + 2 reduced [NADPH--hemoprotein reductase] + 2 O2 = 11-oxomiltiradiene + 2 oxidized [NADPH--hemoprotein reductase] + 3 H2O + 2 H(+). The protein operates within secondary metabolite biosynthesis; terpenoid biosynthesis. Monooxygenase involved in the biosynthesis of labdane-related diterpenes natural products. Catalyzes the oxidation of abietatriene to produce ferruginol. Ferruginol is an intermediate in the biosynthesis of carnosate, a potent antioxidant. May also convert miltiradiene into 11-oxomiltiradiene. This is Ferruginol synthase from Salvia pomifera (Apple sage).